A 366-amino-acid chain; its full sequence is G-protein coupled receptor 183 (366 aa).

Topologically, residues 1 to 37 (MQVMRTFNQPPTSSHPTPTLNDSDTCITLYNHRGYAR) are extracellular. N-linked (GlcNAc...) asparagine glycosylation is present at Asn21. The chain crosses the membrane as a helical span at residues 38–63 (VLMPLFYCIVFFVGLLGNALAFHIIR). Residues 64-83 (PNVKKINSTTLYSANLVISD) are Cytoplasmic-facing. Residues 84-101 (ILFTLSLPLRIIYYALGF) traverse the membrane as a helical segment. Topologically, residues 102–111 (HWPLGETLCK) are extracellular. Cys110 and Cys188 form a disulfide bridge. Residues 112 to 133 (IVGLIFYINTYAGVNFMTCLSV) traverse the membrane as a helical segment. The Cytoplasmic segment spans residues 134-155 (DRFIAVVLPLRFARFRKVSNVR). Residues 156-174 (YICVGVWLLVLMQTLPLLS) traverse the membrane as a helical segment. Residues 175-199 (MPMTNEEPDGFITCMEYPNFEPVPN) are Extracellular-facing. A helical membrane pass occupies residues 200–222 (ISYILIGAVFLGYGVPVVTILVC). The Cytoplasmic portion of the chain corresponds to 223–248 (YSILCCKLRLAAKANQLTDKSGRSQK). Residues 249–272 (AIGVICCVSLVFVVCFSPYHIDLL) traverse the membrane as a helical segment. Over 273 to 292 (QYMIRKLIYTPDCAELTAFQ) the chain is Extracellular. A helical transmembrane segment spans residues 293–317 (ISLHFTVCLMNLNSCLDPFIYFFAC). The Cytoplasmic portion of the chain corresponds to 318-366 (KGYKTKVLKILKRQVSVSFSSAARTLPEGLSRDISDGNKIHLNSTRHKE).

This sequence belongs to the G-protein coupled receptor 1 family.

The protein resides in the cell membrane. Functionally, G-protein coupled receptor expressed in lymphocytes that acts as a chemotactic receptor for B-cells, T-cells, splenic dendritic cells, monocytes/macrophages and astrocytes. Receptor for oxysterol 7-alpha,25-dihydroxycholesterol (7-alpha,25-OHC) and other related oxysterols. Mediates cell positioning and movement of a number of cells by binding the 7-alpha,25-OHC ligand that forms a chemotactic gradient. Binding of 7-alpha,25-OHC mediates the correct localization of B-cells during humoral immune responses. This is G-protein coupled receptor 183 (gpr183) from Salmo salar (Atlantic salmon).